A 177-amino-acid polypeptide reads, in one-letter code: Large ribosomal subunit protein bL9 (177 aa).

Residues 151–177 (VEEEPAEEVEAPAETEVAEDAEEATEA) form a disordered region.

The protein belongs to the bacterial ribosomal protein bL9 family.

Functionally, binds to the 23S rRNA. The polypeptide is Large ribosomal subunit protein bL9 (Maridesulfovibrio salexigens (strain ATCC 14822 / DSM 2638 / NCIMB 8403 / VKM B-1763) (Desulfovibrio salexigens)).